The following is a 268-amino-acid chain: Ribosomal RNA small subunit methyltransferase A (268 aa).

S-adenosyl-L-methionine contacts are provided by Asn-12, Leu-14, Gly-38, Glu-59, Asp-82, and Asn-107.

It belongs to the class I-like SAM-binding methyltransferase superfamily. rRNA adenine N(6)-methyltransferase family. RsmA subfamily.

It is found in the cytoplasm. The enzyme catalyses adenosine(1518)/adenosine(1519) in 16S rRNA + 4 S-adenosyl-L-methionine = N(6)-dimethyladenosine(1518)/N(6)-dimethyladenosine(1519) in 16S rRNA + 4 S-adenosyl-L-homocysteine + 4 H(+). Its function is as follows. Specifically dimethylates two adjacent adenosines (A1518 and A1519) in the loop of a conserved hairpin near the 3'-end of 16S rRNA in the 30S particle. May play a critical role in biogenesis of 30S subunits. This Aster yellows witches'-broom phytoplasma (strain AYWB) protein is Ribosomal RNA small subunit methyltransferase A.